The sequence spans 333 residues: tRNA(Ile)-lysidine synthase (333 aa).

33 to 38 (SGGADS) is a binding site for ATP.

Belongs to the tRNA(Ile)-lysidine synthase family.

It localises to the cytoplasm. The catalysed reaction is cytidine(34) in tRNA(Ile2) + L-lysine + ATP = lysidine(34) in tRNA(Ile2) + AMP + diphosphate + H(+). Functionally, ligates lysine onto the cytidine present at position 34 of the AUA codon-specific tRNA(Ile) that contains the anticodon CAU, in an ATP-dependent manner. Cytidine is converted to lysidine, thus changing the amino acid specificity of the tRNA from methionine to isoleucine. The protein is tRNA(Ile)-lysidine synthase of Salinispora tropica (strain ATCC BAA-916 / DSM 44818 / JCM 13857 / NBRC 105044 / CNB-440).